Here is a 154-residue protein sequence, read N- to C-terminus: Myoglobin (154 aa).

In terms of domain architecture, Globin spans 2–148 (GLSDQEWQQV…FRNDMASKYK (147 aa)). H65 serves as a coordination point for nitrite. Position 65 (H65) interacts with O2. H94 serves as a coordination point for heme b.

It belongs to the globin family. As to quaternary structure, monomeric.

It is found in the cytoplasm. Its subcellular location is the sarcoplasm. The catalysed reaction is Fe(III)-heme b-[protein] + nitric oxide + H2O = Fe(II)-heme b-[protein] + nitrite + 2 H(+). It carries out the reaction H2O2 + AH2 = A + 2 H2O. Monomeric heme protein which primary function is to store oxygen and facilitate its diffusion within muscle tissues. Reversibly binds oxygen through a pentacoordinated heme iron and enables its timely and efficient release as needed during periods of heightened demand. Depending on the oxidative conditions of tissues and cells, and in addition to its ability to bind oxygen, it also has a nitrite reductase activity whereby it regulates the production of bioactive nitric oxide. Under stress conditions, like hypoxia and anoxia, it also protects cells against reactive oxygen species thanks to its pseudoperoxidase activity. This Cerorhinca monocerata (Rhinoceros auklet) protein is Myoglobin (MB).